Reading from the N-terminus, the 98-residue chain is Integration host factor subunit alpha (98 aa).

This sequence belongs to the bacterial histone-like protein family. Heterodimer of an alpha and a beta chain.

Its function is as follows. This protein is one of the two subunits of integration host factor, a specific DNA-binding protein that functions in genetic recombination as well as in transcriptional and translational control. The chain is Integration host factor subunit alpha from Glaesserella parasuis serovar 5 (strain SH0165) (Haemophilus parasuis).